Here is a 222-residue protein sequence, read N- to C-terminus: MRKDVKIYLNHILESIELIEEYTKDKTEDDFFTSKFLQDAVIRRIEIIGEAIKNLPMEFREKYNHIPWKEFAEMRDILIRKYFGVDLGLTWEVVKKDIPKLKEEILKIMEELDKNKNNKYNVFAYGELMKKERLLELINRVPKMIEGRVYGYEKFFDETIGYYGARKKEGSYIDGIILLDITDKELGIFDDYEDLDVYYIREKTTAVSEDGRKYDVYIYLRK.

R75 is a catalytic residue. The RX(4)HXY motif motif lies at 75–82 (RDILIRKY). The residue at position 82 (Y82) is an O-di-AMP-tyrosine.

In the N-terminal section; belongs to the HepT RNase toxin family. The protein in the C-terminal section; belongs to the gamma-glutamylcyclotransferase family. Homodimer, probably forms a complex with cognate antitoxin MJ0435. Post-translationally, modified by cognate antitoxin MJ0435; probably at least 2 successive AMPylation events occur on Tyr-82.

In terms of biological role, probable toxic component of a putative type VII toxin-antitoxin (TA) system, probably an RNase. Probably neutralized by cognate antitoxin MJ0435. Neutralization may be due to AMPylation by MJ0435. In Methanocaldococcus jannaschii (strain ATCC 43067 / DSM 2661 / JAL-1 / JCM 10045 / NBRC 100440) (Methanococcus jannaschii), this protein is Gamma-glutamylcyclotransferase and putative RNase MJ0434.